The sequence spans 302 residues: MLVRDRAELRAALVALDRAASSHPPAAAQDAGPARAASRHDRPVRAVVMTMGALHEGHASLLRAARARADQVVATIFVNPLQFGAGEDLDRYPRTLAADLAVCAREGVDVVFAPAVIHDPPPLVRFGAGPLGAVLEGASRPGHFDGMLTLVGTMLHLVQPDLAFFGRKDAQQLVCIRRMVADLAFDVTVIGVETAREPDGLARSSRNVYLTAEQRTEALALSRALAAGAAASADGAPAVLAAARAVLDAADGVDVDYLELAGPEDLGPVRGGPALLLVAARVGTTRLIDNVSLILPTDTQGA.

M51–H58 is an ATP binding site. Catalysis depends on H58, which acts as the Proton donor. Q82 provides a ligand contact to (R)-pantoate. Q82 is a beta-alanine binding site. G166–D169 contributes to the ATP binding site. Q172 lines the (R)-pantoate pocket. Residues A195 and R203–R206 contribute to the ATP site.

It belongs to the pantothenate synthetase family. As to quaternary structure, homodimer.

The protein resides in the cytoplasm. The catalysed reaction is (R)-pantoate + beta-alanine + ATP = (R)-pantothenate + AMP + diphosphate + H(+). It participates in cofactor biosynthesis; (R)-pantothenate biosynthesis; (R)-pantothenate from (R)-pantoate and beta-alanine: step 1/1. In terms of biological role, catalyzes the condensation of pantoate with beta-alanine in an ATP-dependent reaction via a pantoyl-adenylate intermediate. The sequence is that of Pantothenate synthetase 4 from Frankia alni (strain DSM 45986 / CECT 9034 / ACN14a).